Here is a 171-residue protein sequence, read N- to C-terminus: UPF0763 protein KHP_0657 (171 aa).

Belongs to the UPF0763 family.

This Helicobacter pylori (strain 51) protein is UPF0763 protein KHP_0657.